The chain runs to 547 residues: MAELTISSDEIRSAIANYTSSYSAEASREEVGVVISAADGIAQVSGLPSVMANELLEFPGGVIGVAQNLEADRVGVVVLGNYELLKEGDQVRRTGDVLSIPVGEAFLGRVINPLGQPIDGLGEIASEEDRVLELQAPTVLERQPVEEPLATGIKAIDAMTPIGRGQRQLIIGDRKTGKTAVCVDTILNQKANWETGDKTKQVRCIYVAIGQKGSTIAALRKTLEEQGALEYTTIVAAPASDAAGFKWLAPFAGAALAQHWMYQGNHVLVIYDDLTKQAEAYRAISLLLRRPPGREAYPGDVFYLHSRLLERAAKLSDDLGAGSITALPIIETKANDVSAFIPTNVISITDGQVFLESDLFNRGIRPAINVGVSVSRVGGAAQTKGMKKVAGSLRLDLAAFRDLEAFATFASDLDAASKSQLERGQRLVQLLIQSENAPQAVEYQIISLWLAGEGAFDNVPVEDVRRFESELHEYLGSNAAQVYEQIAGGAQLSDESKETLLKATEDFKSAFQTTDGTPVINEPEVEALDAGQVKKDQLTVSRKVSKK.

Position 172–179 (172–179 (GDRKTGKT)) interacts with ATP.

It belongs to the ATPase alpha/beta chains family. As to quaternary structure, F-type ATPases have 2 components, CF(1) - the catalytic core - and CF(0) - the membrane proton channel. CF(1) has five subunits: alpha(3), beta(3), gamma(1), delta(1), epsilon(1). CF(0) has three main subunits: a(1), b(2) and c(9-12). The alpha and beta chains form an alternating ring which encloses part of the gamma chain. CF(1) is attached to CF(0) by a central stalk formed by the gamma and epsilon chains, while a peripheral stalk is formed by the delta and b chains.

Its subcellular location is the cell membrane. It catalyses the reaction ATP + H2O + 4 H(+)(in) = ADP + phosphate + 5 H(+)(out). Produces ATP from ADP in the presence of a proton gradient across the membrane. The alpha chain is a regulatory subunit. The polypeptide is ATP synthase subunit alpha (Corynebacterium glutamicum (strain R)).